We begin with the raw amino-acid sequence, 119 residues long: MKKLTLKKSERIRKRRSYLQIYQHGKRSFTKHFTIVVSENDLDFPRLGMTVTKKIGNAVKRNRIKRLIREFFRLNKDRFKASQDIVIIAKGNTSSMKYADVCRELGVLLTKEPQNITQE.

It belongs to the RnpA family. As to quaternary structure, consists of a catalytic RNA component (M1 or rnpB) and a protein subunit.

The catalysed reaction is Endonucleolytic cleavage of RNA, removing 5'-extranucleotides from tRNA precursor.. Functionally, RNaseP catalyzes the removal of the 5'-leader sequence from pre-tRNA to produce the mature 5'-terminus. It can also cleave other RNA substrates such as 4.5S RNA. The protein component plays an auxiliary but essential role in vivo by binding to the 5'-leader sequence and broadening the substrate specificity of the ribozyme. This Syntrophus aciditrophicus (strain SB) protein is Ribonuclease P protein component.